The sequence spans 838 residues: DNA gyrase subunit A (838 aa).

The Topo IIA-type catalytic domain maps to 41-510 (LPEVRDGLKP…ADGDVSDEDL (470 aa)). The O-(5'-phospho-DNA)-tyrosine intermediate role is filled by Tyr129. The short motif at 537–543 (QKRGGKG) is the GyrA-box element.

This sequence belongs to the type II topoisomerase GyrA/ParC subunit family. In terms of assembly, heterotetramer, composed of two GyrA and two GyrB chains. In the heterotetramer, GyrA contains the active site tyrosine that forms a transient covalent intermediate with DNA, while GyrB binds cofactors and catalyzes ATP hydrolysis. It depends on Mg(2+) as a cofactor.

The protein resides in the cytoplasm. It carries out the reaction ATP-dependent breakage, passage and rejoining of double-stranded DNA.. With respect to regulation, DNA supercoiling is inhibited by EDTA, novobiocin, coumermycin and ciprofloxacin. In terms of biological role, a type II topoisomerase that negatively supercoils closed circular double-stranded (ds) DNA in an ATP-dependent manner to modulate DNA topology and maintain chromosomes in an underwound state. Also catalyzes the interconversion of other topological isomers of double-stranded DNA rings, including catenanes and knotted rings. Relaxes negatively supercoiled DNA in an ATP-independent manner. A linear reaction intermediate can be trapped in the presence of the antibiotic ciprofloxacin. Negative supercoiling favors strand separation, and DNA replication, transcription, recombination and repair, all of which involve strand separation. Type II topoisomerases break and join 2 DNA strands simultaneously in an ATP-dependent manner. This chain is DNA gyrase subunit A, found in Mycobacterium bovis (strain BCG / Pasteur 1173P2).